The sequence spans 354 residues: 3-dehydroquinate synthase (354 aa).

NAD(+) is bound by residues 61-66, 119-120, Lys132, Lys141, and 159-162; these read DGESTK, TT, and FLET. 3 residues coordinate Zn(2+): Glu174, His238, and His254.

Belongs to the sugar phosphate cyclases superfamily. Dehydroquinate synthase family. NAD(+) serves as cofactor. The cofactor is Co(2+). Requires Zn(2+) as cofactor.

The protein localises to the cytoplasm. The enzyme catalyses 7-phospho-2-dehydro-3-deoxy-D-arabino-heptonate = 3-dehydroquinate + phosphate. The protein operates within metabolic intermediate biosynthesis; chorismate biosynthesis; chorismate from D-erythrose 4-phosphate and phosphoenolpyruvate: step 2/7. In terms of biological role, catalyzes the conversion of 3-deoxy-D-arabino-heptulosonate 7-phosphate (DAHP) to dehydroquinate (DHQ). In Saccharolobus solfataricus (strain ATCC 35092 / DSM 1617 / JCM 11322 / P2) (Sulfolobus solfataricus), this protein is 3-dehydroquinate synthase.